The chain runs to 259 residues: Imidazole glycerol phosphate synthase subunit HisF (259 aa).

Active-site residues include Asp-11 and Asp-130.

This sequence belongs to the HisA/HisF family. In terms of assembly, heterodimer of HisH and HisF.

It is found in the cytoplasm. The enzyme catalyses 5-[(5-phospho-1-deoxy-D-ribulos-1-ylimino)methylamino]-1-(5-phospho-beta-D-ribosyl)imidazole-4-carboxamide + L-glutamine = D-erythro-1-(imidazol-4-yl)glycerol 3-phosphate + 5-amino-1-(5-phospho-beta-D-ribosyl)imidazole-4-carboxamide + L-glutamate + H(+). The protein operates within amino-acid biosynthesis; L-histidine biosynthesis; L-histidine from 5-phospho-alpha-D-ribose 1-diphosphate: step 5/9. In terms of biological role, IGPS catalyzes the conversion of PRFAR and glutamine to IGP, AICAR and glutamate. The HisF subunit catalyzes the cyclization activity that produces IGP and AICAR from PRFAR using the ammonia provided by the HisH subunit. The protein is Imidazole glycerol phosphate synthase subunit HisF of Desulforapulum autotrophicum (strain ATCC 43914 / DSM 3382 / VKM B-1955 / HRM2) (Desulfobacterium autotrophicum).